The chain runs to 407 residues: Argininosuccinate synthase (407 aa).

ATP contacts are provided by residues 11-19 (AYSGGLDTS) and Ala39. L-citrulline contacts are provided by Tyr90 and Ser95. Gly120 is an ATP binding site. Residues Thr122, Asn126, and Asp127 each contribute to the L-aspartate site. Asn126 is a binding site for L-citrulline. Residues Arg130, Ser179, Ser188, Glu264, and Tyr276 each coordinate L-citrulline.

Belongs to the argininosuccinate synthase family. Type 1 subfamily. In terms of assembly, homotetramer.

It localises to the cytoplasm. The catalysed reaction is L-citrulline + L-aspartate + ATP = 2-(N(omega)-L-arginino)succinate + AMP + diphosphate + H(+). It functions in the pathway amino-acid biosynthesis; L-arginine biosynthesis; L-arginine from L-ornithine and carbamoyl phosphate: step 2/3. This is Argininosuccinate synthase from Roseiflexus sp. (strain RS-1).